A 379-amino-acid chain; its full sequence is Cell growth-regulating nucleolar protein (379 aa).

2 C2HC LYAR-type zinc fingers span residues 1 to 26 (MVFF…SVCR) and 28 to 52 (CECL…VKCI). Zn(2+) contacts are provided by Cys-6 and Cys-9. Lys-14 is covalently cross-linked (Glycyl lysine isopeptide (Lys-Gly) (interchain with G-Cter in SUMO2)). Residues His-21, Cys-25, Cys-33, Cys-36, His-48, and Cys-51 each contribute to the Zn(2+) site. Residues 161 to 307 (PHAEISTKVP…PEDDEAPAKG (147 aa)) form a disordered region. 2 stretches are compositionally biased toward basic and acidic residues: residues 173 to 196 (KVKD…EERQ) and 203 to 216 (KKEL…ENSR). A coiled-coil region spans residues 175 to 219 (KDAVEQQGEVKKNKRERKEERQKKRKREKKELKLENHQENSRNQK). A Glycyl lysine isopeptide (Lys-Gly) (interchain with G-Cter in SUMO2) cross-link involves residue Lys-207. Ser-215 is modified (phosphoserine). A compositionally biased stretch (acidic residues) spans 229-239 (ADLEAGGEEVP). Ser-244 is modified (phosphoserine). Composition is skewed to basic and acidic residues over residues 256–265 (KDSASEEEAR) and 276–295 (SEVE…HPEG).

In terms of assembly, interacts with PRMT5; this interaction is direct. Interacts with GNL2 and RPL23A. Interacts with nucleolin/NCL; this interaction is direct. Interacts with phosphorylated IRF3; this interaction impairs IRF3 DNA-binding activity. As to expression, predominantly expressed in testis.

The protein localises to the nucleus. The protein resides in the nucleolus. Its subcellular location is the cytoplasm. It localises to the cell projection. It is found in the cilium. The protein localises to the photoreceptor outer segment. Plays a role in the maintenance of the appropriate processing of 47S/45S pre-rRNA to 32S/30S pre-rRNAs and their subsequent processing to produce 18S and 28S rRNAs. Also acts at the level of transcription regulation. Along with PRMT5, binds the gamma-globin (HBG1/HBG2) promoter and represses its expression. In neuroblastoma cells, may also repress the expression of oxidative stress genes, including CHAC1, HMOX1, SLC7A11, ULBP1 and SNORD41 that encodes a small nucleolar RNA. Preferentially binds to a DNA motif containing 5'-GGTTAT-3'. Negatively regulates the antiviral innate immune response by targeting IRF3 and impairing its DNA-binding activity. In addition, inhibits NF-kappa-B-mediated expression of pro-inflammatory cytokines. Stimulates phagocytosis of photoreceptor outer segments by retinal pigment epithelial cells. Prevents nucleolin/NCL self-cleavage, maintaining a normal steady-state level of NCL protein in undifferentiated embryonic stem cells (ESCs), which in turn is essential for ESC self-renewal. This Homo sapiens (Human) protein is Cell growth-regulating nucleolar protein (LYAR).